The following is a 956-amino-acid chain: DNA replication helicase (956 aa).

120–127 contacts ATP; sequence GTAGAGKT. The interval 658-694 is disordered; it reads PINNHVDADSSQGGQSVPVSQRMEHGQEETHDIPCLS. Over residues 667 to 678 the composition is skewed to low complexity; sequence SSQGGQSVPVSQ. The segment covering 679–694 has biased composition (basic and acidic residues); sequence RMEHGQEETHDIPCLS.

Belongs to the herpesviridae helicase family. As to quaternary structure, associates with the primase and the primase-associated factor to form the helicase-primase complex.

Its subcellular location is the host nucleus. Its function is as follows. Component of the helicase/primase complex. Unwinds the DNA at the replication forks and generates single-stranded DNA for both leading and lagging strand synthesis. The primase synthesizes short RNA primers on the lagging strand that the polymerase elongates using dNTPs. Possesses helicase-like motifs and therefore may act as the helicase subunit of the complex. This Human cytomegalovirus (strain Merlin) (HHV-5) protein is DNA replication helicase.